Here is a 1402-residue protein sequence, read N- to C-terminus: Transcription elongation factor spt-6 (1402 aa).

The interval 1–199 (MSNSMRDLID…PKDRGLNIDT (199 aa)) is disordered. Acidic residues-rich tracts occupy residues 10-28 (DGEA…DEEA), 40-52 (DSSE…EDEE), 62-75 (IVDE…EDSD), and 90-102 (EEEE…DLDL). A compositionally biased stretch (basic and acidic residues) spans 123-135 (HRDDHRPTERRGL). A compositionally biased stretch (acidic residues) spans 161–176 (DEFDDFIEDDYPEDDE). Over residues 177 to 199 (ERRHREEDEEVARPKDRGLNIDT) the composition is skewed to basic and acidic residues. The S1 motif domain maps to 1094–1161 (GMIVAANVRV…KEFVSKLSMR (68 aa)). Positions 1209–1306 (PLFKPFNSTQ…KKVDELMQCD (98 aa)) constitute an SH2 domain.

The protein belongs to the SPT6 family.

Its subcellular location is the nucleus. It localises to the chromosome. Histone H3-H4 chaperone that plays a role in maintenance of chromatin structure during RNA polymerase II transcription elongation thereby repressing transcription initiation from cryptic promoters. Mediates the reassembly of nucleosomes onto the promoters of at least a selected set of genes during repression; the nucleosome reassembly is essential for transcriptional repression. Essential for viability. This Neurospora crassa (strain ATCC 24698 / 74-OR23-1A / CBS 708.71 / DSM 1257 / FGSC 987) protein is Transcription elongation factor spt-6 (spt-6).